We begin with the raw amino-acid sequence, 177 residues long: 3-isopropylmalate dehydratase small subunit 1 (177 aa).

Residues 157 to 177 (GRFPGEEPGAEASTETASAAE) are disordered. The segment covering 162-177 (EEPGAEASTETASAAE) has biased composition (low complexity).

This sequence belongs to the LeuD family. LeuD type 2 subfamily. Heterodimer of LeuC and LeuD.

It carries out the reaction (2R,3S)-3-isopropylmalate = (2S)-2-isopropylmalate. It participates in amino-acid biosynthesis; L-leucine biosynthesis; L-leucine from 3-methyl-2-oxobutanoate: step 2/4. Catalyzes the isomerization between 2-isopropylmalate and 3-isopropylmalate, via the formation of 2-isopropylmaleate. The sequence is that of 3-isopropylmalate dehydratase small subunit 1 (leuD1) from Deinococcus radiodurans (strain ATCC 13939 / DSM 20539 / JCM 16871 / CCUG 27074 / LMG 4051 / NBRC 15346 / NCIMB 9279 / VKM B-1422 / R1).